Here is a 245-residue protein sequence, read N- to C-terminus: Fibroblast growth factor 13 (245 aa).

The segment at 1–36 is disordered; sequence MAAAIASSLIRQKRQAREREKSNACKCVSSPSKGKT. The segment at 1-62 is mediates targeting to the nucleus; sequence MAAAIASSLI…GSKKRRRRRP (62 aa). The segment at 67–201 is mediates interaction with sodium channels; that stretch reads KGIVTKLYSR…AHFLPKPLKV (135 aa). S208 bears the Phosphoserine mark. A disordered region spans residues 213–245; the sequence is TEFSRSGSGTPTKSRSVSGVLNGGKSMSHNEST. The segment covering 215-245 has biased composition (polar residues); sequence FSRSGSGTPTKSRSVSGVLNGGKSMSHNEST.

This sequence belongs to the heparin-binding growth factors family. In terms of assembly, interacts with SCN8A; regulates SCN8A activity. Interacts with SCN1A; may regulate SCN1A activity. Interacts with SCN5A; the interaction is direct and may regulate SNC5A density at membranes and function. May also interact with SCN2A and SCN11A. Interacts with MAPK8IP2; may regulate the MAPK8IP2 scaffolding activity. In terms of processing, may be phosphorylated. In terms of tissue distribution, ubiquitously expressed. Predominantly expressed in the nervous system.

It is found in the nucleus. The protein localises to the cytoplasm. Its subcellular location is the cell projection. It localises to the filopodium. The protein resides in the growth cone. It is found in the dendrite. The protein localises to the cell membrane. Its subcellular location is the sarcolemma. Microtubule-binding protein which directly binds tubulin and is involved in both polymerization and stabilization of microtubules. Through its action on microtubules, may participate in the refinement of axons by negatively regulating axonal and leading processes branching. Plays a crucial role in neuron polarization and migration in the cerebral cortex and the hippocampus. Regulates voltage-gated sodium channel transport and function. May also play a role in MAPK signaling. Required for the development of axonal initial segment-targeting inhibitory GABAergic synapses made by chandelier neurons. This is Fibroblast growth factor 13 from Homo sapiens (Human).